Here is a 250-residue protein sequence, read N- to C-terminus: Pyrroloquinoline-quinone synthase (250 aa).

This sequence belongs to the PqqC family.

The enzyme catalyses 6-(2-amino-2-carboxyethyl)-7,8-dioxo-1,2,3,4,7,8-hexahydroquinoline-2,4-dicarboxylate + 3 O2 = pyrroloquinoline quinone + 2 H2O2 + 2 H2O + H(+). It participates in cofactor biosynthesis; pyrroloquinoline quinone biosynthesis. Its function is as follows. Ring cyclization and eight-electron oxidation of 3a-(2-amino-2-carboxyethyl)-4,5-dioxo-4,5,6,7,8,9-hexahydroquinoline-7,9-dicarboxylic-acid to PQQ. This Xanthomonas oryzae pv. oryzae (strain MAFF 311018) protein is Pyrroloquinoline-quinone synthase.